The sequence spans 126 residues: MHLSLLKAKIHRATVTHSELNYEGSIAIDGLLLEATGIREFEQVHIWDVTNGARFSTYAIRAEEGSGIISLNGGAARHVQVGDLIIVAAFAGMSEDEAKTFKPNLVYVDAHNAISHTNHSIPTQAA.

The active-site Schiff-base intermediate with substrate; via pyruvic acid is the serine 25. Serine 25 is modified (pyruvic acid (Ser)). Threonine 57 contributes to the substrate binding site. Tyrosine 58 serves as the catalytic Proton donor. 73–75 provides a ligand contact to substrate; it reads GGA.

This sequence belongs to the PanD family. As to quaternary structure, heterooctamer of four alpha and four beta subunits. Pyruvate serves as cofactor. In terms of processing, is synthesized initially as an inactive proenzyme, which is activated by self-cleavage at a specific serine bond to produce a beta-subunit with a hydroxyl group at its C-terminus and an alpha-subunit with a pyruvoyl group at its N-terminus.

Its subcellular location is the cytoplasm. It catalyses the reaction L-aspartate + H(+) = beta-alanine + CO2. Its pathway is cofactor biosynthesis; (R)-pantothenate biosynthesis; beta-alanine from L-aspartate: step 1/1. In terms of biological role, catalyzes the pyruvoyl-dependent decarboxylation of aspartate to produce beta-alanine. This Xanthomonas campestris pv. campestris (strain B100) protein is Aspartate 1-decarboxylase.